A 98-amino-acid polypeptide reads, in one-letter code: Co-chaperonin GroES 1 (98 aa).

This sequence belongs to the GroES chaperonin family. In terms of assembly, heptamer of 7 subunits arranged in a ring. Interacts with the chaperonin GroEL.

It localises to the cytoplasm. Together with the chaperonin GroEL, plays an essential role in assisting protein folding. The GroEL-GroES system forms a nano-cage that allows encapsulation of the non-native substrate proteins and provides a physical environment optimized to promote and accelerate protein folding. GroES binds to the apical surface of the GroEL ring, thereby capping the opening of the GroEL channel. This Rhizobium meliloti (strain 1021) (Ensifer meliloti) protein is Co-chaperonin GroES 1.